Reading from the N-terminus, the 228-residue chain is Deoxyribose-phosphate aldolase (228 aa).

The Proton donor/acceptor role is filled by Asp-96. Catalysis depends on Lys-157, which acts as the Schiff-base intermediate with acetaldehyde. The active-site Proton donor/acceptor is the Lys-185.

This sequence belongs to the DeoC/FbaB aldolase family. DeoC type 1 subfamily.

The protein localises to the cytoplasm. The catalysed reaction is 2-deoxy-D-ribose 5-phosphate = D-glyceraldehyde 3-phosphate + acetaldehyde. The protein operates within carbohydrate degradation; 2-deoxy-D-ribose 1-phosphate degradation; D-glyceraldehyde 3-phosphate and acetaldehyde from 2-deoxy-alpha-D-ribose 1-phosphate: step 2/2. Functionally, catalyzes a reversible aldol reaction between acetaldehyde and D-glyceraldehyde 3-phosphate to generate 2-deoxy-D-ribose 5-phosphate. The polypeptide is Deoxyribose-phosphate aldolase (Cyanothece sp. (strain PCC 7425 / ATCC 29141)).